The chain runs to 249 residues: 1-(5-phosphoribosyl)-5-[(5-phosphoribosylamino)methylideneamino] imidazole-4-carboxamide isomerase (249 aa).

The active-site Proton acceptor is aspartate 8. The Proton donor role is filled by aspartate 130.

It belongs to the HisA/HisF family.

It localises to the cytoplasm. It catalyses the reaction 1-(5-phospho-beta-D-ribosyl)-5-[(5-phospho-beta-D-ribosylamino)methylideneamino]imidazole-4-carboxamide = 5-[(5-phospho-1-deoxy-D-ribulos-1-ylimino)methylamino]-1-(5-phospho-beta-D-ribosyl)imidazole-4-carboxamide. It functions in the pathway amino-acid biosynthesis; L-histidine biosynthesis; L-histidine from 5-phospho-alpha-D-ribose 1-diphosphate: step 4/9. In Chromohalobacter salexigens (strain ATCC BAA-138 / DSM 3043 / CIP 106854 / NCIMB 13768 / 1H11), this protein is 1-(5-phosphoribosyl)-5-[(5-phosphoribosylamino)methylideneamino] imidazole-4-carboxamide isomerase.